A 278-amino-acid polypeptide reads, in one-letter code: 3-methyl-2-oxobutanoate hydroxymethyltransferase (278 aa).

2 residues coordinate Mg(2+): D43 and D82. Residues 43–44 (DS), D82, and K112 each bind 3-methyl-2-oxobutanoate. E114 lines the Mg(2+) pocket. The active-site Proton acceptor is E181.

The protein belongs to the PanB family. In terms of assembly, homodecamer; pentamer of dimers. Requires Mg(2+) as cofactor.

It localises to the cytoplasm. It carries out the reaction 3-methyl-2-oxobutanoate + (6R)-5,10-methylene-5,6,7,8-tetrahydrofolate + H2O = 2-dehydropantoate + (6S)-5,6,7,8-tetrahydrofolate. The protein operates within cofactor biosynthesis; (R)-pantothenate biosynthesis; (R)-pantoate from 3-methyl-2-oxobutanoate: step 1/2. Catalyzes the reversible reaction in which hydroxymethyl group from 5,10-methylenetetrahydrofolate is transferred onto alpha-ketoisovalerate to form ketopantoate. The protein is 3-methyl-2-oxobutanoate hydroxymethyltransferase of Desulfitobacterium hafniense (strain DSM 10664 / DCB-2).